Here is a 391-residue protein sequence, read N- to C-terminus: Terminal nucleotidyltransferase 5C (391 aa).

Belongs to the TENT family. Interacts with BCCIP and PABPC1; the interaction has no effect on TENT5C poly(A) polymerase function. Interacts with PLK4; this interaction leads to the TENT5C recruitment into the centrosome.

It is found in the nucleus. Its subcellular location is the cytoplasm. The protein localises to the cytoskeleton. It localises to the microtubule organizing center. The protein resides in the centrosome. It carries out the reaction RNA(n) + ATP = RNA(n)-3'-adenine ribonucleotide + diphosphate. In terms of biological role, catalyzes the transfer of one adenosine molecule from an ATP to an mRNA poly(A) tail bearing a 3'-OH terminal group and enhances mRNA stability and gene expression. Can also elongate RNA oligos ending with uridine molecule, provided that the sequence is adenosine-rich. Mainly targets mRNAs encoding endoplasmic reticulum-targeted protein. The protein is Terminal nucleotidyltransferase 5C of Macaca fascicularis (Crab-eating macaque).